A 128-amino-acid polypeptide reads, in one-letter code: Large ribosomal subunit protein bL12c (128 aa).

The disordered stretch occupies residues 103-128; the sequence is QEGLGKDAAEDAKKQIEDAGGKVSLT. Residues 106-122 show a composition bias toward basic and acidic residues; sequence LGKDAAEDAKKQIEDAG.

It belongs to the bacterial ribosomal protein bL12 family. As to quaternary structure, homodimer. Part of the ribosomal stalk of the 50S ribosomal subunit. Forms a multimeric L10(L12)X complex, where L10 forms an elongated spine to which 2 to 4 L12 dimers bind in a sequential fashion. Binds GTP-bound translation factors.

The protein localises to the plastid. It localises to the chloroplast. Its function is as follows. Forms part of the ribosomal stalk which helps the ribosome interact with GTP-bound translation factors. Is thus essential for accurate translation. This Thalassiosira pseudonana (Marine diatom) protein is Large ribosomal subunit protein bL12c.